The sequence spans 382 residues: Prophage ps2 probable integrase (382 aa).

Residues 63 to 142 (AKFTDIAEEW…TLNLIFDYAV (80 aa)) enclose the Core-binding (CB) domain. The Tyr recombinase domain maps to 170–376 (IQNKYLEQNE…TENMKSSIID (207 aa)). Active-site residues include Arg-209, Lys-242, His-326, Arg-329, and His-352. Tyr-363 functions as the O-(3'-phospho-DNA)-tyrosine intermediate in the catalytic mechanism.

It belongs to the 'phage' integrase family.

The protein is Prophage ps2 probable integrase (ps201) of Lactococcus lactis subsp. lactis (strain IL1403) (Streptococcus lactis).